The following is a 168-amino-acid chain: Large ribosomal subunit protein bL9 (168 aa).

The segment at 149–168 is disordered; that stretch reads QSFEEEPAPEAPAEEAEAAE. Acidic residues predominate over residues 152–168; sequence EEEPAPEAPAEEAEAAE.

The protein belongs to the bacterial ribosomal protein bL9 family.

Its function is as follows. Binds to the 23S rRNA. In Desulfovibrio desulfuricans (strain ATCC 27774 / DSM 6949 / MB), this protein is Large ribosomal subunit protein bL9.